The primary structure comprises 545 residues: CTP synthase (545 aa).

Residues 1 to 266 are amidoligase domain; sequence MTTKYIFVTG…DSYFTERFGL (266 aa). CTP is bound at residue Ser14. Residue Ser14 coordinates UTP. ATP is bound by residues 15 to 20 and Asp72; that span reads SLGKGI. Mg(2+) is bound by residues Asp72 and Glu140. CTP-binding positions include 147–149, 187–192, and Lys223; these read DIE and KTKPTQ. UTP contacts are provided by residues 187–192 and Lys223; that span reads KTKPTQ. Residue 239–241 coordinates ATP; it reads KDV. The 252-residue stretch at 291-542 folds into the Glutamine amidotransferase type-1 domain; that stretch reads TIGMVGKYVS…VKAAGEYQKR (252 aa). Gly352 lines the L-glutamine pocket. Catalysis depends on Cys379, which acts as the Nucleophile; for glutamine hydrolysis. L-glutamine contacts are provided by residues 380-383, Glu403, and Arg470; that span reads LGMQ. Residues His515 and Glu517 contribute to the active site.

Belongs to the CTP synthase family. As to quaternary structure, homotetramer.

It catalyses the reaction UTP + L-glutamine + ATP + H2O = CTP + L-glutamate + ADP + phosphate + 2 H(+). The enzyme catalyses L-glutamine + H2O = L-glutamate + NH4(+). The catalysed reaction is UTP + NH4(+) + ATP = CTP + ADP + phosphate + 2 H(+). The protein operates within pyrimidine metabolism; CTP biosynthesis via de novo pathway; CTP from UDP: step 2/2. Its activity is regulated as follows. Allosterically activated by GTP, when glutamine is the substrate; GTP has no effect on the reaction when ammonia is the substrate. The allosteric effector GTP functions by stabilizing the protein conformation that binds the tetrahedral intermediate(s) formed during glutamine hydrolysis. Inhibited by the product CTP, via allosteric rather than competitive inhibition. Catalyzes the ATP-dependent amination of UTP to CTP with either L-glutamine or ammonia as the source of nitrogen. Regulates intracellular CTP levels through interactions with the four ribonucleotide triphosphates. In Aeromonas hydrophila subsp. hydrophila (strain ATCC 7966 / DSM 30187 / BCRC 13018 / CCUG 14551 / JCM 1027 / KCTC 2358 / NCIMB 9240 / NCTC 8049), this protein is CTP synthase.